We begin with the raw amino-acid sequence, 95 residues long: ESAT-6-like protein EsxH (95 aa).

It belongs to the WXG100 family. ESAT-6 subfamily. As to quaternary structure, forms a tight 1:1 complex with EsxG.

It localises to the secreted. The sequence is that of ESAT-6-like protein EsxH from Mycolicibacterium smegmatis (strain ATCC 700084 / mc(2)155) (Mycobacterium smegmatis).